The sequence spans 330 residues: Beta-ketoacyl-[acyl-carrier-protein] synthase III (330 aa).

Catalysis depends on residues Cys-114 and His-255. The segment at 256-260 (QANQR) is ACP-binding. Asn-285 is an active-site residue.

Belongs to the thiolase-like superfamily. FabH family. As to quaternary structure, homodimer.

The protein localises to the cytoplasm. It carries out the reaction malonyl-[ACP] + acetyl-CoA + H(+) = 3-oxobutanoyl-[ACP] + CO2 + CoA. Its pathway is lipid metabolism; fatty acid biosynthesis. In terms of biological role, catalyzes the condensation reaction of fatty acid synthesis by the addition to an acyl acceptor of two carbons from malonyl-ACP. Catalyzes the first condensation reaction which initiates fatty acid synthesis and may therefore play a role in governing the total rate of fatty acid production. Possesses both acetoacetyl-ACP synthase and acetyl transacylase activities. Its substrate specificity determines the biosynthesis of branched-chain and/or straight-chain of fatty acids. This is Beta-ketoacyl-[acyl-carrier-protein] synthase III from Trichormus variabilis (strain ATCC 29413 / PCC 7937) (Anabaena variabilis).